A 180-amino-acid chain; its full sequence is MEMTFHATTIFAIHHNGKCAMAGDGQVTFGNAVVMKHTARKVRKIYHGKVLAGFAGSVADAFTLFEKFEAKLEEFNGNLQRSAVEVAKEWRSDKVLRRLEAMLIVMNEEHLLLVSGTGEVIEPDDGILAIGSGGNYALAAGRALKKKAPQLSAREIAQAALETAGDICVYTNDQLIVEEL.

The active site involves Thr8. Na(+)-binding residues include Gly165, Cys168, and Thr171.

This sequence belongs to the peptidase T1B family. HslV subfamily. As to quaternary structure, a double ring-shaped homohexamer of HslV is capped on each side by a ring-shaped HslU homohexamer. The assembly of the HslU/HslV complex is dependent on binding of ATP.

Its subcellular location is the cytoplasm. The enzyme catalyses ATP-dependent cleavage of peptide bonds with broad specificity.. With respect to regulation, allosterically activated by HslU binding. In terms of biological role, protease subunit of a proteasome-like degradation complex believed to be a general protein degrading machinery. This Halalkalibacterium halodurans (strain ATCC BAA-125 / DSM 18197 / FERM 7344 / JCM 9153 / C-125) (Bacillus halodurans) protein is ATP-dependent protease subunit HslV.